Here is a 352-residue protein sequence, read N- to C-terminus: DNA polymerase IV (352 aa).

A UmuC domain is found at 4–185 (IIHVDMDCFF…LPLSKIPGVG (182 aa)). Mg(2+) contacts are provided by Asp-8 and Asp-103. The active site involves Glu-104.

It belongs to the DNA polymerase type-Y family. In terms of assembly, monomer. Requires Mg(2+) as cofactor.

It localises to the cytoplasm. The catalysed reaction is DNA(n) + a 2'-deoxyribonucleoside 5'-triphosphate = DNA(n+1) + diphosphate. In terms of biological role, poorly processive, error-prone DNA polymerase involved in untargeted mutagenesis. Copies undamaged DNA at stalled replication forks, which arise in vivo from mismatched or misaligned primer ends. These misaligned primers can be extended by PolIV. Exhibits no 3'-5' exonuclease (proofreading) activity. May be involved in translesional synthesis, in conjunction with the beta clamp from PolIII. The polypeptide is DNA polymerase IV (Yersinia pestis bv. Antiqua (strain Antiqua)).